A 132-amino-acid polypeptide reads, in one-letter code: Large ribosomal subunit protein bL19 (132 aa).

The protein belongs to the bacterial ribosomal protein bL19 family.

This protein is located at the 30S-50S ribosomal subunit interface and may play a role in the structure and function of the aminoacyl-tRNA binding site. In Nitrosomonas europaea (strain ATCC 19718 / CIP 103999 / KCTC 2705 / NBRC 14298), this protein is Large ribosomal subunit protein bL19.